The primary structure comprises 88 residues: Small ribosomal subunit protein uS17 (88 aa).

Belongs to the universal ribosomal protein uS17 family. Part of the 30S ribosomal subunit.

In terms of biological role, one of the primary rRNA binding proteins, it binds specifically to the 5'-end of 16S ribosomal RNA. This is Small ribosomal subunit protein uS17 from Marinobacter nauticus (strain ATCC 700491 / DSM 11845 / VT8) (Marinobacter aquaeolei).